A 247-amino-acid polypeptide reads, in one-letter code: DNA polymerase sliding clamp (247 aa).

It belongs to the PCNA family. In terms of assembly, homotrimer. The subunits circularize to form a toroid; DNA passes through its center. Replication factor C (RFC) is required to load the toroid on the DNA.

In terms of biological role, sliding clamp subunit that acts as a moving platform for DNA processing. Responsible for tethering the catalytic subunit of DNA polymerase and other proteins to DNA during high-speed replication. The sequence is that of DNA polymerase sliding clamp from Halobacterium salinarum (strain ATCC 29341 / DSM 671 / R1).